A 140-amino-acid polypeptide reads, in one-letter code: 3-hydroxyacyl-[acyl-carrier-protein] dehydratase FabZ (140 aa).

Residue His48 is part of the active site.

This sequence belongs to the thioester dehydratase family. FabZ subfamily.

Its subcellular location is the cytoplasm. It carries out the reaction a (3R)-hydroxyacyl-[ACP] = a (2E)-enoyl-[ACP] + H2O. Involved in unsaturated fatty acids biosynthesis. Catalyzes the dehydration of short chain beta-hydroxyacyl-ACPs and long chain saturated and unsaturated beta-hydroxyacyl-ACPs. In Exiguobacterium sibiricum (strain DSM 17290 / CCUG 55495 / CIP 109462 / JCM 13490 / 255-15), this protein is 3-hydroxyacyl-[acyl-carrier-protein] dehydratase FabZ.